The sequence spans 323 residues: Methionyl-tRNA formyltransferase (323 aa).

121 to 124 (SLLP) serves as a coordination point for (6S)-5,6,7,8-tetrahydrofolate.

The protein belongs to the Fmt family.

The enzyme catalyses L-methionyl-tRNA(fMet) + (6R)-10-formyltetrahydrofolate = N-formyl-L-methionyl-tRNA(fMet) + (6S)-5,6,7,8-tetrahydrofolate + H(+). In terms of biological role, attaches a formyl group to the free amino group of methionyl-tRNA(fMet). The formyl group appears to play a dual role in the initiator identity of N-formylmethionyl-tRNA by promoting its recognition by IF2 and preventing the misappropriation of this tRNA by the elongation apparatus. The polypeptide is Methionyl-tRNA formyltransferase (Desulfotalea psychrophila (strain LSv54 / DSM 12343)).